Consider the following 1165-residue polypeptide: ATP-dependent helicase/deoxyribonuclease subunit B (1165 aa).

The UvrD-like helicase ATP-binding domain occupies 1–324 (MRFIIGGAGS…LVEAQNRREE (324 aa)). 6–13 (GGAGSGKS) provides a ligand contact to ATP. One can recognise a UvrD-like helicase C-terminal domain in the interval 282–597 (PLRFRGAPEL…IVGTVERSRH (316 aa)). The [4Fe-4S] cluster site is built by Cys-803, Cys-1121, Cys-1124, and Cys-1130.

Belongs to the helicase family. AddB/RexB type 1 subfamily. In terms of assembly, heterodimer of AddA and AddB. Requires Mg(2+) as cofactor. [4Fe-4S] cluster is required as a cofactor.

Functionally, the heterodimer acts as both an ATP-dependent DNA helicase and an ATP-dependent, dual-direction single-stranded exonuclease. Recognizes the chi site generating a DNA molecule suitable for the initiation of homologous recombination. The AddB subunit has 5' -&gt; 3' nuclease activity but not helicase activity. In Symbiobacterium thermophilum (strain DSM 24528 / JCM 14929 / IAM 14863 / T), this protein is ATP-dependent helicase/deoxyribonuclease subunit B.